The chain runs to 219 residues: Ribose-5-phosphate isomerase A (219 aa).

Substrate contacts are provided by residues 28-31, 81-84, and 94-97; these read TGST, DGAD, and KGGG. Glu-103 (proton acceptor) is an active-site residue. A substrate-binding site is contributed by Lys-121.

This sequence belongs to the ribose 5-phosphate isomerase family. Homodimer.

The enzyme catalyses aldehydo-D-ribose 5-phosphate = D-ribulose 5-phosphate. The protein operates within carbohydrate degradation; pentose phosphate pathway; D-ribose 5-phosphate from D-ribulose 5-phosphate (non-oxidative stage): step 1/1. In terms of biological role, catalyzes the reversible conversion of ribose-5-phosphate to ribulose 5-phosphate. The protein is Ribose-5-phosphate isomerase A of Edwardsiella ictaluri (strain 93-146).